The primary structure comprises 431 residues: Guanine nucleotide exchange factor rei-2 (431 aa).

A compositionally biased stretch (polar residues) spans 1–21 (MDETATSSEVTETFVSDPTTR). Positions 1–28 (MDETATSSEVTETFVSDPTTRQFEEDGH) are disordered. Coiled coils occupy residues 149–171 (EVLN…AESL) and 214–247 (LEAQ…RISE). Residues 249–298 (IHEERSTGSLESAVSSDQEDQKSDFKSSESLPGNPPPYAPTAPPPYEDKY) form a disordered region. Residues 255 to 264 (TGSLESAVSS) are compositionally biased toward polar residues. The segment covering 281–293 (GNPPPYAPTAPPP) has biased composition (pro residues).

The protein belongs to the SH3BP5 family. In terms of assembly, interacts with rab-11.1. Binds preferentially to the GDP-bound form of rab-11.1.

Its function is as follows. Guanine nucleotide exchange factor for Rab GTPase Rab-11.1. May spatially and temporally regulate the distribution of Rab-11.1 to target membranes during embryogenesis. May play a role in cytokinesis, probably by targeting rab-11.1 to the cleavage furrows. This is Guanine nucleotide exchange factor rei-2 from Caenorhabditis elegans.